Here is a 498-residue protein sequence, read N- to C-terminus: Protein nucleotidyltransferase YdiU (498 aa).

Gly88, Gly90, Arg91, Lys111, Asp123, Gly124, Arg174, and Arg181 together coordinate ATP. The active-site Proton acceptor is the Asp250. 2 residues coordinate Mg(2+): Asn251 and Asp260. Position 260 (Asp260) interacts with ATP.

This sequence belongs to the SELO family. Requires Mg(2+) as cofactor. The cofactor is Mn(2+).

The catalysed reaction is L-seryl-[protein] + ATP = 3-O-(5'-adenylyl)-L-seryl-[protein] + diphosphate. The enzyme catalyses L-threonyl-[protein] + ATP = 3-O-(5'-adenylyl)-L-threonyl-[protein] + diphosphate. It carries out the reaction L-tyrosyl-[protein] + ATP = O-(5'-adenylyl)-L-tyrosyl-[protein] + diphosphate. It catalyses the reaction L-histidyl-[protein] + UTP = N(tele)-(5'-uridylyl)-L-histidyl-[protein] + diphosphate. The catalysed reaction is L-seryl-[protein] + UTP = O-(5'-uridylyl)-L-seryl-[protein] + diphosphate. The enzyme catalyses L-tyrosyl-[protein] + UTP = O-(5'-uridylyl)-L-tyrosyl-[protein] + diphosphate. In terms of biological role, nucleotidyltransferase involved in the post-translational modification of proteins. It can catalyze the addition of adenosine monophosphate (AMP) or uridine monophosphate (UMP) to a protein, resulting in modifications known as AMPylation and UMPylation. The polypeptide is Protein nucleotidyltransferase YdiU (Methylorubrum populi (strain ATCC BAA-705 / NCIMB 13946 / BJ001) (Methylobacterium populi)).